The primary structure comprises 625 residues: ATP-dependent rRNA helicase spb4 (625 aa).

The Q motif motif lies at 14 to 42; sequence WDALTPSLAEWILDAIKSMGFEKMTPVQA. Residues 45 to 246 form the Helicase ATP-binding domain; sequence IPLFMGNKDV…RVGLRNPVKI (202 aa). Residue 58–65 participates in ATP binding; that stretch reads AVTGSGKT. The short motif at 194–197 is the DEAD box element; that stretch reads DEAD. The region spanning 278-436 is the Helicase C-terminal domain; that stretch reads ALLSLLSQLQ…TTDDAAKILI (159 aa). Residues 550–597 are disordered; it reads KKQREAWSQKHEKQDLKELKREKKKRKREIERLDKMTDEEKRVEQEKE. Basic and acidic residues-rich tracts occupy residues 553–570 and 577–597; these read REAWSQKHEKQDLKELKR and REIERLDKMTDEEKRVEQEKE. Residues 557 to 614 are a coiled coil; that stretch reads SQKHEKQDLKELKREKKKRKREIERLDKMTDEEKRVEQEKERELQALIEQVKRRKIED.

This sequence belongs to the DEAD box helicase family. DDX55/SPB4 subfamily. Component of pre-60S ribosomal complexes.

The protein localises to the nucleus. It is found in the nucleolus. It carries out the reaction ATP + H2O = ADP + phosphate + H(+). Functionally, ATP-binding RNA helicase involved in the biogenesis of 60S ribosomal subunits. Binds 90S pre-ribosomal particles and dissociates from pre-60S ribosomal particles after processing of 27SB pre-rRNA. Required for the normal formation of 18S rRNA through the processing of pre-rRNAs at sites A0, A1 and A2, and the normal formation of 25S and 5.8S rRNAs through the processing of pre-rRNAs at sites C1 and C2. The sequence is that of ATP-dependent rRNA helicase spb4 from Sclerotinia sclerotiorum (strain ATCC 18683 / 1980 / Ss-1) (White mold).